Consider the following 478-residue polypeptide: MSAATAAAAASGIQSTAGAIPMRNEKGELSMQKVKVQRYISGKRPDYARADSSSEESDDDDFIDTRKRLERHKAERHKLELSRQGGSAEGEERAAGEGQEEDDAEVDDPRLRRLRQRPVDMEDMERERRERHRHIHEPEIMESDSEDEEEDEGAQGAIQRGTNKITLASESDTDAELSDTELENRRTKLRSRMLQQQREEEVLQKEDEKQSESSESESSEYEEETESEEDNEPRLKPLFVRKRDRATIQEKEREAQKQKQLEAEAKRAAKERRRATLRMVEESVKKDLEKTKPETNEACIEDVCTDDENDEVEYEAWKLRELKRMKRDREERDNVEREKLDIDRMRNMTEEERRQELRQNPKVVTNKATKGKYKFLQKYYHRGAFYLDEENDVLKRDFAQATLEDHFDKTILPKVMQVKNFGRCGRTKYTHLVDQDTTKFDSPWYAESSSNIKFHNEHAGGMRQQFDKPTGSKRKKME.

A compositionally biased stretch (low complexity) spans 1–20 (MSAATAAAAASGIQSTAGAI). Disordered stretches follow at residues 1–276 (MSAA…RRAT) and 456–478 (NEHA…KKME). The segment covering 53-62 (SSEESDDDDF) has biased composition (acidic residues). Positions 107 to 128 (DDPRLRRLRQRPVDMEDMERER) are enriched in basic and acidic residues. The segment covering 140 to 153 (IMESDSEDEEEDEG) has biased composition (acidic residues). The span at 160 to 170 (RGTNKITLASE) shows a compositional bias: polar residues. The segment covering 171–181 (SDTDAELSDTE) has biased composition (acidic residues). A compositionally biased stretch (basic and acidic residues) spans 197-212 (QREEEVLQKEDEKQSE). Acidic residues predominate over residues 214 to 231 (SESESSEYEEETESEEDN). The segment at 229–478 (EDNEPRLKPL…PTGSKRKKME (250 aa)) is interaction with Prp38. Positions 245–268 (RATIQEKEREAQKQKQLEAEAKRA) are enriched in basic and acidic residues.

Belongs to the MFAP1 family. As to quaternary structure, component of the spliceosome B complex. Interacts (via C-terminus) with Prp38.

It is found in the nucleus. Its function is as follows. Required for pre-mRNA splicing. This chain is Microfibrillar-associated protein 1, found in Drosophila melanogaster (Fruit fly).